A 982-amino-acid chain; its full sequence is Pentatricopeptide repeat-containing protein At5g62370 (982 aa).

24 PPR repeats span residues 94–129 (DSSC…GIVP), 130–164 (DSSV…GYAP), 165–199 (SRNS…GSGL), 200–234 (WLWC…TRMP), 236–270 (PVNL…GYYV), 271–305 (DKVM…SFEL), 306–340 (DPCI…GVQS), 341–376 (NVFT…DISR), 377–411 (NVHC…GIVP), 412–446 (DHIT…GCGI), 476–510 (AAVG…GCTP), 511–545 (LPFS…DFVP), 546–580 (DVDT…GLRP), 581–615 (TVAI…GIQP), 616–650 (DEIA…FLRP), 651–685 (SSFT…GLSP), 686–720 (NVVL…DIKH), 721–755 (DHIA…KLLQ), 759–789 (RTKP…VKKS), 793–827 (NLYL…GIVP), 828–858 (NLVT…TNCE), 860–894 (DQVM…GINP), 895–929 (NKDS…DIWP), and 930–964 (RSIN…GRSL).

The protein belongs to the PPR family. P subfamily.

The sequence is that of Pentatricopeptide repeat-containing protein At5g62370 from Arabidopsis thaliana (Mouse-ear cress).